Consider the following 666-residue polypeptide: DNA mismatch repair protein MutL (666 aa).

This sequence belongs to the DNA mismatch repair MutL/HexB family.

Functionally, this protein is involved in the repair of mismatches in DNA. It is required for dam-dependent methyl-directed DNA mismatch repair. May act as a 'molecular matchmaker', a protein that promotes the formation of a stable complex between two or more DNA-binding proteins in an ATP-dependent manner without itself being part of a final effector complex. This Clostridium botulinum (strain 657 / Type Ba4) protein is DNA mismatch repair protein MutL.